Consider the following 304-residue polypeptide: Pseudouridine-5'-phosphate glycosidase (304 aa).

The active-site Proton donor is the Glu25. The substrate site is built by Lys86 and Val106. Asp138 contributes to the Mn(2+) binding site. 140 to 142 (SAD) lines the substrate pocket. The Nucleophile role is filled by Lys159.

The protein belongs to the pseudouridine-5'-phosphate glycosidase family. As to quaternary structure, homotrimer. Requires Mn(2+) as cofactor.

It carries out the reaction D-ribose 5-phosphate + uracil = psi-UMP + H2O. Functionally, catalyzes the reversible cleavage of pseudouridine 5'-phosphate (PsiMP) to ribose 5-phosphate and uracil. Functions biologically in the cleavage direction, as part of a pseudouridine degradation pathway. This chain is Pseudouridine-5'-phosphate glycosidase, found in Lysinibacillus sphaericus (strain C3-41).